A 215-amino-acid polypeptide reads, in one-letter code: Octanoyltransferase (215 aa).

The region spanning P35 to G210 is the BPL/LPL catalytic domain. Substrate contacts are provided by residues R74–H81, S141–G143, and G154–A156. The active-site Acyl-thioester intermediate is the C172.

It belongs to the LipB family.

It is found in the cytoplasm. The enzyme catalyses octanoyl-[ACP] + L-lysyl-[protein] = N(6)-octanoyl-L-lysyl-[protein] + holo-[ACP] + H(+). It functions in the pathway protein modification; protein lipoylation via endogenous pathway; protein N(6)-(lipoyl)lysine from octanoyl-[acyl-carrier-protein]: step 1/2. Functionally, catalyzes the transfer of endogenously produced octanoic acid from octanoyl-acyl-carrier-protein onto the lipoyl domains of lipoate-dependent enzymes. Lipoyl-ACP can also act as a substrate although octanoyl-ACP is likely to be the physiological substrate. This Alkalilimnicola ehrlichii (strain ATCC BAA-1101 / DSM 17681 / MLHE-1) protein is Octanoyltransferase.